The primary structure comprises 95 residues: Small ribosomal subunit protein bS16 (95 aa).

It belongs to the bacterial ribosomal protein bS16 family.

This chain is Small ribosomal subunit protein bS16, found in Mycoplasma genitalium (strain ATCC 33530 / DSM 19775 / NCTC 10195 / G37) (Mycoplasmoides genitalium).